Here is a 397-residue protein sequence, read N- to C-terminus: Beta-lactamase (397 aa).

Positions 1–26 (MRDTRFPCLCGIAASTLLFATTPAIA) are cleaved as a signal peptide. S90 serves as the catalytic Acyl-ester intermediate. 5 residues coordinate a beta-lactam: S90, Q146, Y177, N179, and N370. The active-site Proton acceptor is the Y177.

This sequence belongs to the class-C beta-lactamase family. Monomer.

It is found in the periplasm. The catalysed reaction is a beta-lactam + H2O = a substituted beta-amino acid. Class C beta-lactamase which confers resistance to penicillins and cephalosporins. Has nitrocefin-hydrolyzing activity. In Pseudomonas aeruginosa (strain ATCC 15692 / DSM 22644 / CIP 104116 / JCM 14847 / LMG 12228 / 1C / PRS 101 / PAO1), this protein is Beta-lactamase (ampC).